The sequence spans 177 residues: Chorismate pyruvate-lyase (177 aa).

M37, R79, L117, and E159 together coordinate substrate.

Belongs to the UbiC family. In terms of assembly, monomer.

The protein resides in the cytoplasm. The catalysed reaction is chorismate = 4-hydroxybenzoate + pyruvate. It functions in the pathway cofactor biosynthesis; ubiquinone biosynthesis. Its function is as follows. Removes the pyruvyl group from chorismate, with concomitant aromatization of the ring, to provide 4-hydroxybenzoate (4HB) for the ubiquinone pathway. This Sodalis glossinidius (strain morsitans) protein is Chorismate pyruvate-lyase.